A 587-amino-acid chain; its full sequence is Adenine deaminase (587 aa).

The protein belongs to the metallo-dependent hydrolases superfamily. Adenine deaminase family. Mn(2+) is required as a cofactor.

The catalysed reaction is adenine + H2O + H(+) = hypoxanthine + NH4(+). The polypeptide is Adenine deaminase (Shewanella halifaxensis (strain HAW-EB4)).